A 437-amino-acid chain; its full sequence is Nicotinate phosphoribosyltransferase (437 aa).

A Phosphohistidine; by autocatalysis modification is found at H231.

It belongs to the NAPRTase family. Post-translationally, transiently phosphorylated on a His residue during the reaction cycle. Phosphorylation strongly increases the affinity for substrates and increases the rate of nicotinate D-ribonucleotide production. Dephosphorylation regenerates the low-affinity form of the enzyme, leading to product release.

It carries out the reaction nicotinate + 5-phospho-alpha-D-ribose 1-diphosphate + ATP + H2O = nicotinate beta-D-ribonucleotide + ADP + phosphate + diphosphate. It participates in cofactor biosynthesis; NAD(+) biosynthesis; nicotinate D-ribonucleotide from nicotinate: step 1/1. In terms of biological role, catalyzes the synthesis of beta-nicotinate D-ribonucleotide from nicotinate and 5-phospho-D-ribose 1-phosphate at the expense of ATP. The protein is Nicotinate phosphoribosyltransferase of Vibrio vulnificus (strain YJ016).